The following is a 259-amino-acid chain: UPF0246 protein PFLU_0992 (259 aa).

It belongs to the UPF0246 family.

In Pseudomonas fluorescens (strain SBW25), this protein is UPF0246 protein PFLU_0992.